The following is a 281-amino-acid chain: Merozoite surface protein 2 (281 aa).

Residues Met1 to Ile20 form the signal peptide. Asn22 and Asn36 each carry an N-linked (GlcNAc...) asparagine glycan. The interval Ser42–Asn242 is disordered. The polymorphic region stretch occupies residues Glu44–Ser207. 3 tandem repeats follow at residues Gly51–Ala58, Gly59–Ala66, and Gly67–Ala74. Positions Gly51–Ala74 are 3 X 8 AA tandem repeats of G-A-S-G-R-A-G-A. The span at Gly54–Ala76 shows a compositional bias: gly residues. Residues Gly77 to Asn133 are compositionally biased toward low complexity. 2 stretches are compositionally biased toward polar residues: residues Asn150 to Pro174 and Lys181 to Pro209. N-linked (GlcNAc...) asparagine glycosylation is present at Asn158. N-linked (GlcNAc...) asparagine glycosylation is present at Asn230. A disulfide bridge connects residues Cys238 and Cys246. Asn254 and Asn255 each carry an N-linked (GlcNAc...) asparagine glycan. Asn255 is lipidated: GPI-anchor amidated asparagine. The propeptide at Ser256–Ile281 is removed in mature form.

The protein resides in the cell membrane. Its function is as follows. May play a role in the merozoite attachment to the erythrocyte. This is Merozoite surface protein 2 from Plasmodium falciparum (isolate thtn / Thailand).